A 201-amino-acid polypeptide reads, in one-letter code: Small ribosomal subunit protein uS4c (201 aa).

A disordered region spans residues 15 to 44 (LGALPGLTNKRPRAGSDLRNQSRSGKKSQY). An S4 RNA-binding domain is found at 89-149 (MRLDNILFRL…DEQNSRALIQ (61 aa)).

Belongs to the universal ribosomal protein uS4 family. In terms of assembly, part of the 30S ribosomal subunit. Contacts protein S5. The interaction surface between S4 and S5 is involved in control of translational fidelity.

The protein localises to the plastid. It is found in the chloroplast. One of the primary rRNA binding proteins, it binds directly to 16S rRNA where it nucleates assembly of the body of the 30S subunit. Its function is as follows. With S5 and S12 plays an important role in translational accuracy. The protein is Small ribosomal subunit protein uS4c (rps4) of Daucus carota (Wild carrot).